Consider the following 79-residue polypeptide: Large ribosomal subunit protein bL31 (79 aa).

The protein belongs to the bacterial ribosomal protein bL31 family. Type A subfamily. Part of the 50S ribosomal subunit.

In terms of biological role, binds the 23S rRNA. In Trichormus variabilis (strain ATCC 29413 / PCC 7937) (Anabaena variabilis), this protein is Large ribosomal subunit protein bL31.